Here is a 415-residue protein sequence, read N- to C-terminus: N-succinylarginine dihydrolase (415 aa).

Substrate contacts are provided by residues 18–27, Asn100, and 127–128; these read AGLSRGNIAS and HR. Residue Glu161 is part of the active site. A substrate-binding site is contributed by Arg193. The active site involves His229. 2 residues coordinate substrate: Asp231 and Asn340. The active-site Nucleophile is the Cys346.

It belongs to the succinylarginine dihydrolase family. Homodimer.

The enzyme catalyses N(2)-succinyl-L-arginine + 2 H2O + 2 H(+) = N(2)-succinyl-L-ornithine + 2 NH4(+) + CO2. It participates in amino-acid degradation; L-arginine degradation via AST pathway; L-glutamate and succinate from L-arginine: step 2/5. Its function is as follows. Catalyzes the hydrolysis of N(2)-succinylarginine into N(2)-succinylornithine, ammonia and CO(2). In Sphingopyxis alaskensis (strain DSM 13593 / LMG 18877 / RB2256) (Sphingomonas alaskensis), this protein is N-succinylarginine dihydrolase.